The sequence spans 231 residues: Ribonuclease 3 (231 aa).

The 128-residue stretch at 12–139 (LKAFLQKNNI…LIAAIYLDQG (128 aa)) folds into the RNase III domain. Glu-52 provides a ligand contact to Mg(2+). Residue Asp-56 is part of the active site. 2 residues coordinate Mg(2+): Asp-125 and Glu-128. Glu-128 is an active-site residue. In terms of domain architecture, DRBM spans 165–231 (DPKSELQEYF…AANALSKLKT (67 aa)).

Belongs to the ribonuclease III family. Homodimer. Mg(2+) is required as a cofactor.

The protein resides in the cytoplasm. It catalyses the reaction Endonucleolytic cleavage to 5'-phosphomonoester.. In terms of biological role, digests double-stranded RNA. Involved in the processing of primary rRNA transcript to yield the immediate precursors to the large and small rRNAs (23S and 16S). Processes some mRNAs, and tRNAs when they are encoded in the rRNA operon. Processes pre-crRNA and tracrRNA of type II CRISPR loci if present in the organism. This chain is Ribonuclease 3, found in Mycoplasmopsis synoviae (strain 53) (Mycoplasma synoviae).